The sequence spans 643 residues: 3D-(3,5/4)-trihydroxycyclohexane-1,2-dione hydrolase (643 aa).

Glutamate 65 contributes to the thiamine diphosphate binding site. The segment at 441–521 is thiamine pyrophosphate binding; that stretch reads SLPGDLQRMW…VNVLLFDNCG (81 aa). Residues aspartate 492 and asparagine 519 each contribute to the Mg(2+) site.

It belongs to the TPP enzyme family. Mg(2+) serves as cofactor. It depends on thiamine diphosphate as a cofactor.

It catalyses the reaction 3D-3,5/4-trihydroxycyclohexane-1,2-dione + H2O = 5-deoxy-D-glucuronate + H(+). It functions in the pathway polyol metabolism; myo-inositol degradation into acetyl-CoA; acetyl-CoA from myo-inositol: step 3/7. In terms of biological role, involved in the cleavage of the C1-C2 bond of 3D-(3,5/4)-trihydroxycyclohexane-1,2-dione (THcHDO) to yield 5-deoxy-glucuronate (5DG). In Clostridium botulinum (strain Alaska E43 / Type E3), this protein is 3D-(3,5/4)-trihydroxycyclohexane-1,2-dione hydrolase.